Consider the following 999-residue polypeptide: MDRLLNCPNCLKVFNNPRQLECDHILCTRCIEGVYNPGRTPIIKCPVCDKHSIVITSIDKSFPLIHCIEELLTYKYKDCNYDDSLSIPLNNSTGSSNNNNNNNNNNNNNNNNFVINNSNNKNNGATTTTTTTTTTTNSNSNSTKSKVVVNDSSPNLISASPKGLGSSQGSLTTINNQKKLTLSPQRASSTTTTSVNKPPLKLKAISSPPITPNVSTPERCFVINDKNKHVMISSETTIHNVSGLSSISTPIVSDAAIAELSKCNDHDQKKFTIFCTDCDQLLCDECLNNNQQQHENHQLNKIIQEAEKRIGDIESMIITTSLCPNRLINKKNKIEKIIQDSALVLKDTKLKITTDIDTMIENLKERKNALISQIDKEYEEQKLELKDQIETINTTIVDIQNNTSITQGIVSLYLNQVDSEMLSTSLLKKYSDLKRMDQLSDKLSNNLEQNIEWKWEPEYHFPQLFTRSNGEKTTVVYRTKRVSVGVSSSPTGTGSNGTPQQQQQQSANGNPTIITTPPLPPISANSPSPTSSSSSTLIGNIIKRSSPPHLPLSSQNYDNFGSTPPRLTTKLSSPNLSISMPTFPQSNSVQQNGSTSSIMKQQSHGSKLNDNINTNNNNSPSPTSSSTTSTNGSNTKIQLKNPVFGKLLTRKDSVITARRNWIYGFSDHQVEIYDNVTKVWRGGSKIPKKSIEYSSIYDNNCTIYRFGGKETPNDIYCYNVDRDIWEHNKVKIPSKRNAHCSVFDGLRYIYLIGGADRDSSKLLERFDIETQQWTKLASMKFGRSYFNAFYHPTKRCIYVLDGYVNKDKKSSVEMYSLEKNQWSVICEINQPRYLSGVSFDGSKYINIIGGVDRSNSRDIKTMERFDTSTHKWEILNNEPKSLLSHTSSSMNLMVVQSPQLKKNNSFSSISSHSSLNSSSSNNGISGSGGSGGDNEIPTEKMQFFNTSFFDGEQFIFFYGINIDEHGPLLYKFSIKTKKFEKIPIDNTLDLFSTLIFVSK.

The segment at 7–49 (CPNCLKVFNNPRQLECDHILCTRCIEGVYNPGRTPIIKCPVCD) adopts an RING-type zinc-finger fold. Low complexity predominate over residues 92–143 (STGSSNNNNNNNNNNNNNNNNFVINNSNNKNNGATTTTTTTTTTTNSNSNST). Disordered stretches follow at residues 92–147 (STGS…KSKV) and 159–209 (ASPK…SSPP). Over residues 165 to 196 (GSSQGSLTTINNQKKLTLSPQRASSTTTTSVN) the composition is skewed to polar residues. The B box-type zinc-finger motif lies at 258 to 302 (AELSKCNDHDQKKFTIFCTDCDQLLCDECLNNNQQQHENHQLNKI). Zn(2+) contacts are provided by Cys-263, His-266, Cys-286, and His-294. Residues 355-402 (DIDTMIENLKERKNALISQIDKEYEEQKLELKDQIETINTTIVDIQNN) adopt a coiled-coil conformation. Composition is skewed to low complexity over residues 485-516 (GVSS…IITT) and 526-536 (SPSPTSSSSST). A disordered region spans residues 485 to 637 (GVSSSPTGTG…TSTNGSNTKI (153 aa)). The span at 552–612 (LSSQNYDNFG…SHGSKLNDNI (61 aa)) shows a compositional bias: polar residues. Positions 613 to 635 (NTNNNNSPSPTSSSTTSTNGSNT) are enriched in low complexity. 5 Kelch repeats span residues 655 to 700 (ITAR…YDNN), 702 to 745 (TIYR…VFDG), 748 to 793 (YIYL…YHPT), 796 to 842 (CIYV…FDGS), and 844 to 892 (YINI…SMNL). Over residues 904 to 924 (NSFSSISSHSSLNSSSSNNGI) the composition is skewed to low complexity. The disordered stretch occupies residues 904–936 (NSFSSISSHSSLNSSSSNNGISGSGGSGGDNEI).

The chain is RING finger domain and kelch repeat-containing protein DDB_G0271372 from Dictyostelium discoideum (Social amoeba).